Here is a 103-residue protein sequence, read N- to C-terminus: Cell division protein FtsB (103 aa).

The Cytoplasmic segment spans residues 1–3 (MGK). The helical transmembrane segment at 4 to 21 (LTLLLLALLVWLQYSLWF) threads the bilayer. At 22 to 103 (GKNGIHDYSR…RAQTAGQNNR (82 aa)) the chain is on the periplasmic side. Positions 33–62 (NDDVVAQQATNAKLKARNDQLFAEIDDLNG) form a coiled coil.

The protein belongs to the FtsB family. Part of a complex composed of FtsB, FtsL and FtsQ.

It localises to the cell inner membrane. In terms of biological role, essential cell division protein. May link together the upstream cell division proteins, which are predominantly cytoplasmic, with the downstream cell division proteins, which are predominantly periplasmic. In Salmonella arizonae (strain ATCC BAA-731 / CDC346-86 / RSK2980), this protein is Cell division protein FtsB.